We begin with the raw amino-acid sequence, 440 residues long: Argininosuccinate lyase (440 aa).

Belongs to the lyase 1 family. Argininosuccinate lyase subfamily.

It is found in the cytoplasm. It carries out the reaction 2-(N(omega)-L-arginino)succinate = fumarate + L-arginine. Its pathway is amino-acid biosynthesis; L-arginine biosynthesis; L-arginine from L-ornithine and carbamoyl phosphate: step 3/3. This Clostridium botulinum (strain Okra / Type B1) protein is Argininosuccinate lyase.